A 110-amino-acid chain; its full sequence is uncharacterized protein (110 aa).

2 helical membrane-spanning segments follow: residues 21–41 and 63–83; these read IQLA…PQIC and PSMI…IIVV.

The protein resides in the membrane. This is an uncharacterized protein from Saccharomyces cerevisiae (strain ATCC 204508 / S288c) (Baker's yeast).